Consider the following 137-residue polypeptide: Large-conductance mechanosensitive channel (137 aa).

3 helical membrane-spanning segments follow: residues 15 to 35 (IDLA…NSIV), 38 to 58 (IFMP…MFIQ), and 80 to 100 (GNFI…FLFV).

The protein belongs to the MscL family. As to quaternary structure, homopentamer.

It localises to the cell inner membrane. Functionally, channel that opens in response to stretch forces in the membrane lipid bilayer. May participate in the regulation of osmotic pressure changes within the cell. This Bartonella henselae (strain ATCC 49882 / DSM 28221 / CCUG 30454 / Houston 1) (Rochalimaea henselae) protein is Large-conductance mechanosensitive channel.